Here is a 473-residue protein sequence, read N- to C-terminus: Mediator of RNA polymerase II transcription subunit 29 (473 aa).

The segment covering 1 to 12 (MSGQGPPSNLTP) has biased composition (polar residues). 2 disordered regions span residues 1 to 319 (MSGQ…NEEQ) and 444 to 473 (STME…EMAE). Residues 13 to 50 (QQQHMIMQQQQQQQMMRQQQIQQQQLHQRQLQQQQAQQ) are compositionally biased toward low complexity. The span at 51-62 (SYQRSRTPQMQQ) shows a compositional bias: polar residues. 2 stretches are compositionally biased toward low complexity: residues 111–123 (QMMQ…NQPM) and 130–139 (VSRPGSVAPP). 2 stretches are compositionally biased toward polar residues: residues 148–183 (TGPS…QQSH) and 255–269 (PPGS…QPGS). Low complexity-rich tracts occupy residues 272-286 (APGS…QPPA) and 294-308 (AASG…AAPA).

This sequence belongs to the Mediator complex subunit 29 family. Component of the Mediator complex.

Its subcellular location is the nucleus. Functionally, component of the Mediator complex, a coactivator involved in the regulated transcription of nearly all RNA polymerase II-dependent genes. Mediator functions as a bridge to convey information from gene-specific regulatory proteins to the basal RNA polymerase II transcription machinery. Mediator is recruited to promoters by direct interactions with regulatory proteins and serves as a scaffold for the assembly of a functional preinitiation complex with RNA polymerase II and the general transcription factors. The protein is Mediator of RNA polymerase II transcription subunit 29 (mdt-29) of Caenorhabditis briggsae.